The primary structure comprises 703 residues: Collagen alpha-2(VIII) chain (703 aa).

The signal sequence occupies residues 1-28; it reads MLGTLTPLSSLLLLLLVLVLGCGPRASS. The nonhelical region (NC2) stretch occupies residues 29 to 76; that stretch reads GGGAGGAAGYAPVKYIQPMQKGPVGPPFREGKGQYLEMPLPLLPMDLK. The tract at residues 70-544 is disordered; that stretch reads LLPMDLKGEP…AFDETGIAGL (475 aa). The interval 77 to 536 is triple-helical region; it reads GEPGPPGKPG…PGPPGAPGAF (460 aa). The segment covering 79 to 97 has biased composition (pro residues); the sequence is PGPPGKPGPRGPPGPPGFP. Positions 166–192 are enriched in low complexity; that stretch reads PSGITIPGKPGAQGVPGPPGFQGEPGP. A compositionally biased stretch (gly residues) spans 206-224; the sequence is GDNGVGQPGLPGAPGQGGA. 2 stretches are compositionally biased toward low complexity: residues 265–275 and 285–297; these read EPGAVGPKGPP and AAGL…PSGA. Positions 433–442 are enriched in gly residues; that stretch reads GRPGGPGVAG. Composition is skewed to low complexity over residues 444-462 and 476-486; these read LGQK…RGPS and PQGLPGLKGEP. Over residues 506 to 532 the composition is skewed to pro residues; that stretch reads TGPPGVPGSPGITGPPGPPGPPGPPGA. The nonhelical region (NC1) stretch occupies residues 537 to 703; it reads DETGIAGLHL…SFSGFLLCPT (167 aa). A C1q domain is found at 570–703; that stretch reads SAHATPAFTA…SFSGFLLCPT (134 aa).

Homotrimers, or heterotrimers in association with alpha 2(VIII) type collagens. Four homotrimers can form a tetrahedron stabilized by central interacting C-terminal NC1 trimers. In terms of processing, proteolytically cleaved by neutrophil elastase, in vitro. Post-translationally, prolines at the third position of the tripeptide repeating unit (G-X-Y) are hydroxylated in some or all of the chains. In terms of tissue distribution, expressed primarily in the subendothelium of large blood vessels. Also expressed in arterioles and venules in muscle, heart, kidney, spleen, umbilical cord, liver and lung and is also found in connective tissue layers around hair follicles, around nerve bundles in muscle, in the dura of the optic nerve, in cornea and sclera, and in the perichondrium of cartilaginous tissues. In the kidney, expressed in mesangial cells, glomerular endothelial cells, and tubular epithelial cells. Also expressed in mast cells, and in astrocytes during the repair process. Expressed in Descemet's membrane.

It localises to the secreted. The protein resides in the extracellular space. It is found in the extracellular matrix. Its subcellular location is the basement membrane. Macromolecular component of the subendothelium. Major component of the Descemet's membrane (basement membrane) of corneal endothelial cells. Also a component of the endothelia of blood vessels. Necessary for migration and proliferation of vascular smooth muscle cells and thus, has a potential role in the maintenance of vessel wall integrity and structure, in particular in atherogenesis. The polypeptide is Collagen alpha-2(VIII) chain (COL8A2) (Homo sapiens (Human)).